The following is a 489-amino-acid chain: Glycogen synthase (489 aa).

Residue lysine 17 coordinates ADP-alpha-D-glucose.

The protein belongs to the glycosyltransferase 1 family. Bacterial/plant glycogen synthase subfamily.

It carries out the reaction [(1-&gt;4)-alpha-D-glucosyl](n) + ADP-alpha-D-glucose = [(1-&gt;4)-alpha-D-glucosyl](n+1) + ADP + H(+). The protein operates within glycan biosynthesis; glycogen biosynthesis. In terms of biological role, synthesizes alpha-1,4-glucan chains using ADP-glucose. This is Glycogen synthase from Nitratidesulfovibrio vulgaris (strain ATCC 29579 / DSM 644 / CCUG 34227 / NCIMB 8303 / VKM B-1760 / Hildenborough) (Desulfovibrio vulgaris).